Consider the following 160-residue polypeptide: V-type proton ATPase subunit c (160 aa).

The Lumenal segment spans residues 1-6; the sequence is MSDLCP. Residues 7-27 traverse the membrane as a helical segment; sequence VYAPFFGSIGCAAAIVFTCFG. The Cytoplasmic segment spans residues 28-53; that stretch reads ASYGTAKSGVGICATSVTRPDLLVKN. The chain crosses the membrane as a helical span at residues 54–74; it reads VVPVVMAGIIAIYGLVVSVLV. The Lumenal portion of the chain corresponds to 75 to 90; that stretch reads SDSLSQKQALYTGFIQ. A helical transmembrane segment spans residues 91 to 111; it reads LGAGLSVGLSGLAAGFAIGIV. Over 112–129 the chain is Cytoplasmic; the sequence is GDAGVRGTAQQPRLFVGM. A helical transmembrane segment spans residues 130 to 150; that stretch reads ILILIFAEVLGLYGLIVALLL. The Lumenal portion of the chain corresponds to 151 to 160; it reads NSRASQDVTC.

This sequence belongs to the V-ATPase proteolipid subunit family. In terms of assembly, V-ATPase is a heteromultimeric enzyme composed of a peripheral catalytic V1 complex (components A to H) attached to an integral membrane V0 proton pore complex (components: a, c, c', c'', d, e, f and VOA1). The decameric c-ring forms the proton-conducting pore, and is composed of eight proteolipid subunits c, one subunit c' and one subunit c''.

It localises to the vacuole membrane. In terms of biological role, proton-conducting pore forming subunit of the V0 complex of vacuolar(H+)-ATPase (V-ATPase), a multisubunit enzyme composed of a peripheral complex (V1) that hydrolyzes ATP and a membrane integral complex (V0) that translocates protons. V-ATPase is responsible for acidifying and maintaining the pH of intracellular compartments. The protein is V-type proton ATPase subunit c (VMA3) of Candida tropicalis (Yeast).